The following is a 440-amino-acid chain: Protein disulfide-isomerase 5-2 (440 aa).

Residues 1–23 form the signal peptide; sequence MRSLKLLLCWISFLTLSISISAS. Positions 24–139 constitute a Thioredoxin domain; it reads SDDQFTLDGT…LVRYLKKFVA (116 aa). Catalysis depends on nucleophile residues Cys-61 and Cys-64. An intrachain disulfide couples Cys-61 to Cys-64. At Thr-160 the chain carries Phosphothreonine. Asn-171 is a glycosylation site (N-linked (GlcNAc...) asparagine). The helical transmembrane segment at 376–396 threads the bilayer; that stretch reads SMIGIRSVYILVFLVAVIMML. Residues 406–440 are disordered; the sequence is TGVRTATAVRERVDQATTVPEDESSEHKPSDKKED. A compositionally biased stretch (basic and acidic residues) spans 430–440; sequence SEHKPSDKKED.

This sequence belongs to the protein disulfide isomerase family. As to expression, widely expressed.

It localises to the membrane. Its function is as follows. Acts as a protein-folding catalyst that interacts with nascent polypeptides to catalyze the formation, isomerization, and reduction or oxidation of disulfide bonds. This Arabidopsis thaliana (Mouse-ear cress) protein is Protein disulfide-isomerase 5-2 (PDIL5-2).